We begin with the raw amino-acid sequence, 119 residues long: Large ribosomal subunit protein bL19 (119 aa).

This sequence belongs to the bacterial ribosomal protein bL19 family.

This protein is located at the 30S-50S ribosomal subunit interface and may play a role in the structure and function of the aminoacyl-tRNA binding site. This is Large ribosomal subunit protein bL19 from Leuconostoc citreum (strain KM20).